Reading from the N-terminus, the 505-residue chain is TBC1 domain family member 22B (505 aa).

Ala2 is modified (N-acetylalanine). 2 positions are modified to phosphoserine: Ser58 and Ser116. The segment at 105-146 is disordered; the sequence is SKLRVKPERSQSTTSDVPANYKVIKSSSDAQLSRNSSDTCLR. Polar residues predominate over residues 129-146; the sequence is KSSSDAQLSRNSSDTCLR. Ser154 bears the Phosphoserine mark. Residues 210–434 enclose the Rab-GAP TBC domain; it reads GVPREVRPIT…RLWDTYQSEP (225 aa).

Interacts with ACBD3 and ARFGEF1. Interacts with YWHAB, YWHAE, YWHAG, YWHAH, YWHAQ and YWHAZ.

Functionally, may act as a GTPase-activating protein for Rab family protein(s). In Homo sapiens (Human), this protein is TBC1 domain family member 22B (TBC1D22B).